The sequence spans 155 residues: 3-hydroxyacyl-[acyl-carrier-protein] dehydratase FabZ (155 aa).

His-58 is an active-site residue.

It belongs to the thioester dehydratase family. FabZ subfamily.

The protein resides in the cytoplasm. It carries out the reaction a (3R)-hydroxyacyl-[ACP] = a (2E)-enoyl-[ACP] + H2O. In terms of biological role, involved in unsaturated fatty acids biosynthesis. Catalyzes the dehydration of short chain beta-hydroxyacyl-ACPs and long chain saturated and unsaturated beta-hydroxyacyl-ACPs. The protein is 3-hydroxyacyl-[acyl-carrier-protein] dehydratase FabZ of Rhizobium johnstonii (strain DSM 114642 / LMG 32736 / 3841) (Rhizobium leguminosarum bv. viciae).